The chain runs to 578 residues: A-type ATP synthase subunit A (578 aa).

Gly228–Thr235 lines the ATP pocket.

The protein belongs to the ATPase alpha/beta chains family. As to quaternary structure, has multiple subunits with at least A(3), B(3), C, D, E, F, G, I and proteolipid K(x).

The protein localises to the cell membrane. It carries out the reaction ATP + H2O + 4 H(+)(in) = ADP + phosphate + 5 H(+)(out). ATP hydrolysis stimulated by sulfite, ethanol, glycerol, magnesium and zinc ions, inhibited by diethylstilbestrol (DES) and less well by N,N-dicyclohexylcarbodiimide (DCCD). Component of the A-type ATP synthase that produces ATP from ADP in the presence of a proton gradient across the membrane. The A chain is the catalytic subunit. This Methanosarcina mazei (strain ATCC BAA-159 / DSM 3647 / Goe1 / Go1 / JCM 11833 / OCM 88) (Methanosarcina frisia) protein is A-type ATP synthase subunit A.